Consider the following 836-residue polypeptide: MEADNYSPEHSDDGGATPVQDERDSASDDEGNEQRSEPGSPEHQSEDEHSDVEDHKHSSDSGSDNEKGTEHDSEDEHRPRNSSDLENHDASDSENEESHNRIASDSEDDGRRQKNSDSDRSPVKGAASDSDEEPVRHSASDSEDDVPRKQQANDSEDERHIKKTASDSEDEAPAKHRVSDTEDKAPPKQVASDSEDEASPKQVASDSKDEAPPKHAASDSEDEAPPKLAGSDSEDEAPAKRKVSSSEDETPSKHAVSASKVKKSVGSEDKTRGKRAIIDSDDDDDDDVPVKRAASDSEEETHPKGKASDSEDEAPSKQPSDSEEETPAKVAANDSEDEFPRMKRKIVSSDDSDDEDDRKPLQKKKKSPRRSSESDSSDKVDGKKLQASESDEEGEKASKKKKSNIVSDSEDEDAADKSGNKKSRILSDGEDSDSDAASEKPKQKKKKSASSDSEEEDERKSKTETKSADKLFGSESDSENEEENLIADIFGESGDEEEEEFTGFNQEDLEGEKTVTSVNRQQAAAADSDSDDDMKSGKMGDYKSDFDLMLERKKSMSGKQRRNRDGGTFISDADDVVNAMIMKMTEAAEEDRNLNSSKKPALKKLTLLPTVVMHLKKQDLKETFIDSGVMSAIKEWLTPLPDRSLPALKIREELLKILQELPSVSQETLKHSGIGRAIMYLYKHPKESRPNKDIAGKLINEWSRPIFGLTSNYKGMTREEREQRDIEQMPQRRRMSSSGGQTPRRDLDKVLTGEEKALRPGEPGFCARARVPLPSNKDYVVRPKWNVEMETSQYQGSAKKGVSRIDKQMRKFVDIKKKNRFGHAVKISIEGNKMPL.

Residues 1 to 542 (MEADNYSPEH…DMKSGKMGDY (542 aa)) form a disordered region. Basic and acidic residues-rich tracts occupy residues 20–36 (QDER…EQRS), 43–122 (HQSE…DRSP), 133–148 (EPVR…DVPR), 157–186 (DERH…DKAP), 206–218 (DSKD…HAAS), 288–309 (VPVK…KASD), 370–386 (RSSE…KKLQ), and 458–469 (ERKSKTETKSAD). Acidic residues predominate over residues 476–485 (SDSENEEENL). The span at 533–542 (DMKSGKMGDY) shows a compositional bias: basic and acidic residues. Positions 631–709 (SAIKEWLTPL…NEWSRPIFGL (79 aa)) constitute a TFIIS N-terminal domain. Positions 714–746 (KGMTREEREQRDIEQMPQRRRMSSSGGQTPRRD) are disordered. Residues 716–727 (MTREEREQRDIE) are compositionally biased toward basic and acidic residues.

It belongs to the IWS1 family.

Its subcellular location is the nucleus. Functionally, transcription factor which plays a key role in defining the composition of the RNA polymerase II (RNAPII) elongation complex and in modulating the production of mature mRNA transcripts. The chain is Protein IWS1 homolog A (iws1-a) from Xenopus laevis (African clawed frog).